The sequence spans 284 residues: UDP-N-acetylenolpyruvoylglucosamine reductase (284 aa).

An FAD-binding PCMH-type domain is found at 12 to 174 (KIGGRVKYLV…TRVMMSFKRE (163 aa)). Residue arginine 153 is part of the active site. The Proton donor role is filled by serine 203. Glutamate 274 is a catalytic residue.

This sequence belongs to the MurB family. It depends on FAD as a cofactor.

The protein resides in the cytoplasm. It catalyses the reaction UDP-N-acetyl-alpha-D-muramate + NADP(+) = UDP-N-acetyl-3-O-(1-carboxyvinyl)-alpha-D-glucosamine + NADPH + H(+). It functions in the pathway cell wall biogenesis; peptidoglycan biosynthesis. Functionally, cell wall formation. The sequence is that of UDP-N-acetylenolpyruvoylglucosamine reductase from Thermotoga petrophila (strain ATCC BAA-488 / DSM 13995 / JCM 10881 / RKU-1).